The following is a 287-amino-acid chain: Immunoglobulin alpha Fc receptor (287 aa).

Residues 1–21 (MDPKQTTLLCLVLCLGQRIQA) form the signal peptide. The Extracellular segment spans residues 22–227 (QEGDFPMPFI…SIHQDYTTQN (206 aa)). Ig-like C2-type domains are found at residues 42 to 107 (DGSV…IGHY) and 139 to 200 (GENI…YNRS). Cysteines 49 and 100 form a disulfide. N-linked (GlcNAc...) asparagine glycans are attached at residues asparagine 65, asparagine 79, asparagine 141, asparagine 177, and asparagine 186. Cysteine 146 and cysteine 193 are oxidised to a cystine. Residues 228 to 246 (LIRMAVAGLVLVALLAILV) form a helical membrane-spanning segment. The Cytoplasmic portion of the chain corresponds to 247–287 (ENWHSHTALNKEASADVAEPSWSQQMCQPGLTFARTPSVCK).

In terms of assembly, associates with the Fc epsilon RI gamma 2 receptor inducing tyrosine phosphorylation of gamma 2. (Microbial infection) Interacts with Staphylococcus aureus protein SSL11. As to expression, isoform A.1, isoform A.2 and isoform A.3 are differentially expressed between blood and mucosal myeloid cells. Isoform A.1, isoform A.2 and isoform A.3 are expressed in monocytes. Isoform A.1 and isoform A.2 are expressed in alveolar macrophages; however only one isoform is expressed at alveolar macrophages surfaces.

It is found in the cell membrane. Its subcellular location is the secreted. In terms of biological role, binds to the Fc region of immunoglobulins alpha. Mediates several functions including cytokine production. The protein is Immunoglobulin alpha Fc receptor (FCAR) of Homo sapiens (Human).